A 179-amino-acid polypeptide reads, in one-letter code: Inner membrane-spanning protein YciB (179 aa).

Transmembrane regions (helical) follow at residues 22–42 (IYAATSALIVATAIVLIYSWV), 50–70 (MALITFVLVAVFGGLTLFFHN), 76–96 (WKVTVIYALFAGALLISQWVM), 121–141 (LAWALFFIVCGLANIYIAFWL), and 149–169 (FKVFGLTALTLIFTLLSGVYI).

It belongs to the YciB family.

The protein resides in the cell inner membrane. Its function is as follows. Plays a role in cell envelope biogenesis, maintenance of cell envelope integrity and membrane homeostasis. This chain is Inner membrane-spanning protein YciB, found in Salmonella dublin (strain CT_02021853).